Consider the following 624-residue polypeptide: Exocyst complex component EXO70B1 (624 aa).

Residues 148–176 form a disordered region; it reads FGLNPQGDAGAMNHRFDSEEEEDDDRDFN.

This sequence belongs to the EXO70 family. As to quaternary structure, interacts with EXO70B2, SEC5A and EXO84B. Binds to PUB18. Binds directly to B1L at the plasma membrane and in small vesicles. Post-translationally, target of the E3 ubiquitin-protein ligase PUB18 that mediates its ubiquitination and degradation via the 26S proteasome.

It is found in the cytoplasmic vesicle. Its subcellular location is the phagosome. The protein resides in the endomembrane system. It localises to the cell membrane. The protein localises to the vesicle. Its function is as follows. Component of an exocyst subcomplex specifically involved in autophagy-related, Golgi-independent membrane traffic to the vacuole. Regulates autophagosome formation and autophagy-related Golgi-independent import into the vacuole. Positive regulator of both abscisic acid (ABA)-promoted and mannitol (drought)-promoted stomatal closure. Involved in the regulation of lateral root formation. The polypeptide is Exocyst complex component EXO70B1 (Arabidopsis thaliana (Mouse-ear cress)).